We begin with the raw amino-acid sequence, 281 residues long: Elongation factor Ts (281 aa).

The segment at 80 to 83 (TDFV) is involved in Mg(2+) ion dislocation from EF-Tu.

The protein belongs to the EF-Ts family.

Its subcellular location is the cytoplasm. Associates with the EF-Tu.GDP complex and induces the exchange of GDP to GTP. It remains bound to the aminoacyl-tRNA.EF-Tu.GTP complex up to the GTP hydrolysis stage on the ribosome. The chain is Elongation factor Ts from Vibrio atlanticus (strain LGP32) (Vibrio splendidus (strain Mel32)).